Reading from the N-terminus, the 1816-residue chain is MSGASVKVAVRVRPFNSRETSKESKCIIQMQGNSTSIINPKNPKEAPKSFSFDYSYWSHTSPEDPCFASQNRVYNDIGKEMLLHAFEGYNVCIFAYGQTGAGKSYTMMGKQEESQAGIIPQLCEELFEKINDNCNEEMSYSVEVSYMEIYCERVRDLLNPKNKGNLRVREHPLLGPYVEDLSKLAVTSYTDIADLMDAGNKARTVAATNMNETSSRSHAVFTIVFTQKKHDNETNLSTEKVSKISLVDLAGSERADSTGAKGTRLKEGANINKSLTTLGKVISALAEVDNCTSKSKKKKKTDFIPYRDSVLTWLLRENLGGNSRTAMVAALSPADINYDETLSTLRYADRAKQIKCNAVINEDPNAKLVRELKEEVTRLKDLLRAQGLGDIIDIDPLIDDYSGSGSKYLKDFQNNKHRYLLASENQRPGHFSTASMGSLTSSPSSCSLSSQVGLTSVTSIQERIMSTPGGEEAIERLKESEKIIAELNETWEEKLRKTEAIRMEREALLAEMGVAIREDGGTLGVFSPKKTPHLVNLNEDPLMSECLLYYIKDGITRVGQADAERRQDIVLSGAHIKEEHCIFRSERSNSGEVIVTLEPCERSETYVNGKRVSQPVQLRSGNRIIMGKNHVFRFNHPEQARAEREKTPSAETPSEPVDWTFAQRELLEKQGIDMKQEMEKRLQEMEILYKKEKEEADLLLEQQRLDYESKLQALQKQVETRSLAAETTEEEEEEEEVPWTQHEFELAQWAFRKWKSHQFTSLRDLLWGNAVYLKEANAISVELKKKVQFQFVLLTDTLYSPLPPELLPTEMEKTHEDRPFPRTVVAVEVQDLKNGATHYWSLEKLKQRLDLMREMYDRAGEMASSAQDESETTVTGSDPFYDRFHWFKLVGSSPIFHGCVNERLADRTPSPTFSTADSDITELADEQQDEMEDFDDEAFVDDAGSDAGTEEGSDLFSDGHDPFYDRSPWFILVGRAFVYLSNLLYPVPLIHRVAIVSEKGEVRGFLRVAVQAIAADEEAPDYGSGIRQSGTAKISFDNEYFNQSDFSSVAMTRSGLSLEELRIVEGQGQSSEVITPPEEISRINDLDLKSSTLLDGKMVMEGFSEEIGNHLKLGSAFTFRVTVLQASGILPEYADIFCQFNFLHRHDEAFSTEPLKNNGRGSPLAFYHVQNIAVEITESFVDYIKTKPIVFEVFGHYQQHPLHLQGQELNSPPQPCRRFFPPPMPLSKPVPATKLNTMSKTSLGQSMSKYDLLVWFEISELEPTGEYIPAVVDHTAGLPCQGTFLLHQGIQRRITVTIIHEKGSELHWKDVRELVVGRIRNKPEVDEAAVDAILSLNIISAKYLKSSHNSSRTFYRFEAVWDSSLHNSLLLNRVTPYGEKIYMTLSAYLELDHCIQPAVITKDVCMVFYSRDAKISPPRSLRSLFGSGYSKSPDSNRVTGIYELSLCKMSDTGSPGMQRRRRKILDTSVAYVRGEENLAGWRPRGDSLILEHQWELEKLELLHEVEKTRHFLLLRERLGDSIPKSLSDSLSPSLSSGTLSTSTSISSQISTTTFESAITPSESSGYDSGDIESLVDREKELATKCLQLLTHTFNREFSQVHGSVSDCKLSDISPIGRDPSESSFSSATLTPSSTCPSLVDSRSNSLDQKTPEANSRASSPCPEFEQFQIVPAVETPYLARAGKNEFLNLVPDIEEIRPSSVVSKKGYLHFKEPLYSNWAKHFVVVRRPYVFIYNSDKDPVERGIINLSTAQVEYSEDQQAMVKTPNTFAVCTKHRGVLLQALNDKDMNDWLYAFNPLLAGTIRSKLSRRCPSQSKY.

Serine 2 bears the N-acetylserine mark. The Kinesin motor domain maps to 5–354; that stretch reads SVKVAVRVRP…LRYADRAKQI (350 aa). 97–104 contacts ATP; that stretch reads GQTGAGKS. Positions 270–350 are interaction with KIFBP; it reads NINKSLTTLG…TLSTLRYADR (81 aa). The stretch at 365 to 386 forms a coiled coil; the sequence is NAKLVRELKEEVTRLKDLLRAQ. The segment at 431–450 is disordered; the sequence is FSTASMGSLTSSPSSCSLSS. Over residues 432 to 450 the composition is skewed to low complexity; the sequence is STASMGSLTSSPSSCSLSS. A coiled-coil region spans residues 470-502; the sequence is GEEAIERLKESEKIIAELNETWEEKLRKTEAIR. The region spanning 556-612 is the FHA domain; that stretch reads TRVGQADAERRQDIVLSGAHIKEEHCIFRSERSNSGEVIVTLEPCERSETYVNGKRV. Phosphothreonine is present on residues threonine 647 and threonine 652. Phosphoserine is present on residues glutamine 663 and glutamate 665. Coiled coils occupy residues 668-737 and 841-869; these read EKQG…EEEV and SLEK…AQDE. Serine 1054 and serine 1057 each carry phosphoserine. Threonine 1075 carries the post-translational modification Phosphothreonine. A phosphoserine mark is found at asparagine 1141, serine 1416, serine 1454, and serine 1487. The segment at 1550 to 1570 is disordered; sequence STTTFESAITPSESSGYDSGD. A compositionally biased stretch (polar residues) spans 1554 to 1566; that stretch reads FESAITPSESSGY. Residues serine 1573, serine 1603, serine 1610, and serine 1613 each carry the phosphoserine modification. The interval 1617 to 1660 is disordered; sequence RDPSESSFSSATLTPSSTCPSLVDSRSNSLDQKTPEANSRASSP. Residues 1621–1634 show a composition bias toward low complexity; it reads ESSFSSATLTPSST. Residues 1640–1658 show a composition bias toward polar residues; the sequence is DSRSNSLDQKTPEANSRAS. Residues 1702–1799 enclose the PH domain; the sequence is VSKKGYLHFK…WLYAFNPLLA (98 aa).

Belongs to the TRAFAC class myosin-kinesin ATPase superfamily. Kinesin family. Unc-104 subfamily. Monomer. Interacts with KIFBP; positively regulates KIF1B microtubule motor activity. Interacts (via C-terminus end of the kinesin-motor domain) with CHP1; the interaction occurs in a calcium-dependent manner. As to quaternary structure, interacts with MADD (via death domain); links this isoform to Rab3-carrying vesicles in anterograde synaptic vesicle transport. As to expression, isoform 3 is abundant in the skeletal muscle. It is also expressed in fetal brain, lung and kidney, and adult heart, placenta, testis, ovary and small intestine. Isoform 2 is abundant in the brain and also expressed in fetal heart, lung, liver and kidney, and adult skeletal muscle, placenta, liver, kidney, heart, spleen, thymus, prostate, testis, ovary, small intestine, colon and pancreas.

Its subcellular location is the cytoplasm. It is found in the cytoskeleton. The protein localises to the cytoplasmic vesicle. It localises to the secretory vesicle. The protein resides in the synaptic vesicle membrane. Its subcellular location is the mitochondrion. The enzyme catalyses ATP + H2O + a kinesin associated with a microtubule at position (n) = ADP + phosphate a kinesin associated with a microtubule at position (n+1, toward the plus end).. In terms of biological role, has a plus-end-directed microtubule motor activity and functions as a motor for transport of vesicles and organelles along microtubules. Functionally, has a plus-end-directed microtubule motor activity and functions as a motor for anterograde synaptic vesicle transport along axonal microtubules from the cell body to the presynapse in neuronal cells. Functions as a downstream effector in a developmental apoptotic pathway that is activated when nerve growth factor (NGF) becomes limiting for neuronal progenitor cells. Has a plus-end-directed microtubule motor activity and functions as a motor for anterograde transport of mitochondria. The chain is Kinesin-like protein KIF1B from Homo sapiens (Human).